The chain runs to 87 residues: Small ribosomal subunit protein bS20 (87 aa).

The disordered stretch occupies residues 1–29 (MANTAQARKRARQAVKQNAHNSSQRSTLR). Residues 20-29 (HNSSQRSTLR) are compositionally biased toward polar residues.

Belongs to the bacterial ribosomal protein bS20 family.

In terms of biological role, binds directly to 16S ribosomal RNA. The polypeptide is Small ribosomal subunit protein bS20 (Janthinobacterium sp. (strain Marseille) (Minibacterium massiliensis)).